The sequence spans 292 residues: Outer membrane protein assembly factor BamD (292 aa).

The N-terminal stretch at 1 to 26 (MIQRPTFFTPTHLLAMLLATFVLITG) is a signal peptide. Residue Cys27 is the site of N-palmitoyl cysteine attachment. The S-diacylglycerol cysteine moiety is linked to residue Cys27.

This sequence belongs to the BamD family. Part of the Bam complex.

The protein localises to the cell outer membrane. Part of the outer membrane protein assembly complex, which is involved in assembly and insertion of beta-barrel proteins into the outer membrane. The sequence is that of Outer membrane protein assembly factor BamD from Xylella fastidiosa (strain 9a5c).